A 179-amino-acid chain; its full sequence is uncharacterized protein (179 aa).

The signal sequence occupies residues 1–19 (MNTNVFRLLLLGSLFSLSA). Cys-20 is lipidated: N-palmitoyl cysteine. The S-diacylglycerol cysteine moiety is linked to residue Cys-20.

Its subcellular location is the cell membrane. This is an uncharacterized protein from Escherichia coli (strain K12).